Reading from the N-terminus, the 604-residue chain is Elongation factor 4 (604 aa).

One can recognise a tr-type G domain in the interval 10–191; sequence KNIRNFSIIA…KIITTIPAPS (182 aa). GTP is bound by residues 22–27 and 138–141; these read DHGKST and NKID.

The protein belongs to the TRAFAC class translation factor GTPase superfamily. Classic translation factor GTPase family. LepA subfamily.

It localises to the cell inner membrane. The enzyme catalyses GTP + H2O = GDP + phosphate + H(+). Required for accurate and efficient protein synthesis under certain stress conditions. May act as a fidelity factor of the translation reaction, by catalyzing a one-codon backward translocation of tRNAs on improperly translocated ribosomes. Back-translocation proceeds from a post-translocation (POST) complex to a pre-translocation (PRE) complex, thus giving elongation factor G a second chance to translocate the tRNAs correctly. Binds to ribosomes in a GTP-dependent manner. The sequence is that of Elongation factor 4 from Helicobacter pylori (strain J99 / ATCC 700824) (Campylobacter pylori J99).